A 41-amino-acid polypeptide reads, in one-letter code: Photosystem II reaction center protein J (41 aa).

Residues 9-29 (IPLWFVGMVGGLAALGLLAIF) traverse the membrane as a helical segment.

It belongs to the PsbJ family. In terms of assembly, PSII is composed of 1 copy each of membrane proteins PsbA, PsbB, PsbC, PsbD, PsbE, PsbF, PsbH, PsbI, PsbJ, PsbK, PsbL, PsbM, PsbT, PsbX, PsbY, PsbZ, Psb30/Ycf12, at least 3 peripheral proteins of the oxygen-evolving complex and a large number of cofactors. It forms dimeric complexes.

Its subcellular location is the plastid. It localises to the chloroplast thylakoid membrane. Functionally, one of the components of the core complex of photosystem II (PSII). PSII is a light-driven water:plastoquinone oxidoreductase that uses light energy to abstract electrons from H(2)O, generating O(2) and a proton gradient subsequently used for ATP formation. It consists of a core antenna complex that captures photons, and an electron transfer chain that converts photonic excitation into a charge separation. This is Photosystem II reaction center protein J from Ostreococcus tauri.